The chain runs to 480 residues: Immune evasion protein OPG047 (480 aa).

A BTB domain is found at 10 to 90 (CKNILALSMT…SYTGKVYIDS (81 aa)). Positions 125-223 (CVECYMMGIE…NYLSPRGINN (99 aa)) constitute a BACK domain. 5 Kelch repeats span residues 273–319 (VVYL…PANN), 320–363 (KLYV…SINN), 365–408 (IYVM…VFGR), 410–447 (LFLV…IVDN), and 448–480 (KLLL…WDGK).

Belongs to the orthopoxvirus OPG047 family.

In terms of biological role, might have a role in the suppression of host immune response. In Vaccinia virus (strain Western Reserve) (VACV), this protein is Immune evasion protein OPG047 (OPG047).